Here is a 174-residue protein sequence, read N- to C-terminus: Shikimate kinase 2 (174 aa).

An ATP-binding site is contributed by 12-17 (GAGKTT). Threonine 16 and aspartate 32 together coordinate Mg(2+). Aspartate 34, arginine 58, and glycine 79 together coordinate substrate. Residues 112–126 (AEDPEEAQRPSLTGK) are LID domain. Arginine 120 contributes to the ATP binding site. Position 139 (arginine 139) interacts with substrate. ATP is bound at residue glutamine 155.

Belongs to the shikimate kinase family. AroL subfamily. Monomer. Mg(2+) is required as a cofactor.

The protein resides in the cytoplasm. The catalysed reaction is shikimate + ATP = 3-phosphoshikimate + ADP + H(+). Its pathway is metabolic intermediate biosynthesis; chorismate biosynthesis; chorismate from D-erythrose 4-phosphate and phosphoenolpyruvate: step 5/7. In terms of biological role, catalyzes the specific phosphorylation of the 3-hydroxyl group of shikimic acid using ATP as a cosubstrate. The protein is Shikimate kinase 2 of Yersinia pestis bv. Antiqua (strain Antiqua).